The chain runs to 349 residues: Ribosomal RNA large subunit methyltransferase M (349 aa).

Residues 216 to 219, D235, D255, and D271 contribute to the S-adenosyl-L-methionine site; that span reads APGG. K300 serves as the catalytic Proton acceptor.

This sequence belongs to the class I-like SAM-binding methyltransferase superfamily. RNA methyltransferase RlmE family. RlmM subfamily. As to quaternary structure, monomer.

It is found in the cytoplasm. The catalysed reaction is cytidine(2498) in 23S rRNA + S-adenosyl-L-methionine = 2'-O-methylcytidine(2498) in 23S rRNA + S-adenosyl-L-homocysteine + H(+). Its function is as follows. Catalyzes the 2'-O-methylation at nucleotide C2498 in 23S rRNA. The chain is Ribosomal RNA large subunit methyltransferase M from Saccharophagus degradans (strain 2-40 / ATCC 43961 / DSM 17024).